The primary structure comprises 357 residues: Protein RecA (357 aa).

67 to 74 is an ATP binding site; it reads GPESSGKT.

Belongs to the RecA family.

Its subcellular location is the cytoplasm. Its function is as follows. Can catalyze the hydrolysis of ATP in the presence of single-stranded DNA, the ATP-dependent uptake of single-stranded DNA by duplex DNA, and the ATP-dependent hybridization of homologous single-stranded DNAs. It interacts with LexA causing its activation and leading to its autocatalytic cleavage. The sequence is that of Protein RecA from Shewanella oneidensis (strain ATCC 700550 / JCM 31522 / CIP 106686 / LMG 19005 / NCIMB 14063 / MR-1).